Consider the following 134-residue polypeptide: MTLNIRIIAPDRTVWDAEAQEIILPSSTGQLGILTGHAPLLTALDIGVMRVRVDKEWMPIVLLGGFAEIENNQLTILVNGAEEASQIDLSEAEKNLDTATQLLSDASSNKEKIEATQKIRKARARVQAATAATS.

It belongs to the ATPase epsilon chain family. F-type ATPases have 2 components, CF(1) - the catalytic core - and CF(0) - the membrane proton channel. CF(1) has five subunits: alpha(3), beta(3), gamma(1), delta(1), epsilon(1). CF(0) has three main subunits: a, b and c.

It is found in the plastid. Its subcellular location is the chloroplast thylakoid membrane. Functionally, produces ATP from ADP in the presence of a proton gradient across the membrane. The chain is ATP synthase epsilon chain, chloroplastic from Pyropia yezoensis (Susabi-nori).